Reading from the N-terminus, the 206-residue chain is Large ribosomal subunit protein uL4 (206 aa).

It belongs to the universal ribosomal protein uL4 family. In terms of assembly, part of the 50S ribosomal subunit.

One of the primary rRNA binding proteins, this protein initially binds near the 5'-end of the 23S rRNA. It is important during the early stages of 50S assembly. It makes multiple contacts with different domains of the 23S rRNA in the assembled 50S subunit and ribosome. Functionally, forms part of the polypeptide exit tunnel. The protein is Large ribosomal subunit protein uL4 of Nitratidesulfovibrio vulgaris (strain ATCC 29579 / DSM 644 / CCUG 34227 / NCIMB 8303 / VKM B-1760 / Hildenborough) (Desulfovibrio vulgaris).